The primary structure comprises 312 residues: Methionyl-tRNA formyltransferase (312 aa).

Residue S109 to P112 coordinates (6S)-5,6,7,8-tetrahydrofolate.

This sequence belongs to the Fmt family.

The enzyme catalyses L-methionyl-tRNA(fMet) + (6R)-10-formyltetrahydrofolate = N-formyl-L-methionyl-tRNA(fMet) + (6S)-5,6,7,8-tetrahydrofolate + H(+). Functionally, attaches a formyl group to the free amino group of methionyl-tRNA(fMet). The formyl group appears to play a dual role in the initiator identity of N-formylmethionyl-tRNA by promoting its recognition by IF2 and preventing the misappropriation of this tRNA by the elongation apparatus. This is Methionyl-tRNA formyltransferase from Listeria monocytogenes serotype 4a (strain HCC23).